A 61-amino-acid polypeptide reads, in one-letter code: Protein DDR2 (61 aa).

The first 22 residues, 1–22, serve as a signal peptide directing secretion; the sequence is MKVSQVFISAISVFGLATSVNA. Residues Asn24 and Asn27 are each glycosylated (N-linked (GlcNAc...) asparagine).

To yeast HOR7.

May play an important role in the response of cells to diverse environmental stresses. This Saccharomyces cerevisiae (strain ATCC 204508 / S288c) (Baker's yeast) protein is Protein DDR2 (DDR2).